Here is a 566-residue protein sequence, read N- to C-terminus: MSLSLHLSGWPENSESRQRMLESSSSTNFVQHFVSREISNKERLLSLFRRLRNGLVLVLTPLFFGQMLNWEGPEWKCAYCVCIIAVYWMSEVMPLAVTAMLPVVLFPLVGVLDANTTAKEYMNDTNFLFIGGLIMAAAVEKCDLHERVALSVLRCVGSEPKWIMLGFMTVTALLSSFISNTATTAMMVPIGQSVVQQLISSFQHHPTNGERGRLGCKKMATGLVLSICFAANIGGTGTATGTPSNLVMLGQLSALFPKVDGSLNYVTWIFFAYPLMLLCLFVAWMTLVSFFLRDAPEKDEAVTEMLKTRYNELPRMTYAEKSVFVCFCILLSLWVFRNPGVVPGFGVFFKKGAYTDATSAMIVAFLLFVLPSERPDLATYIKKEDLKKRGCLMDWKTMQETFPWSVVLLLGGGFALAAGVKESGLSLLIGNSLSSIEHLPLWILQLLTMLIAMVITNICSNTVTASIFVPIVATLAQRAGHHPFTLMLPTTLASSFAFIFPVGTPPNAIVFGSGMVKVSDMAFVGGIISLELLVLTVLYMNSIAYLTLPLLEFPTWAIIANSTMQQ.

Transmembrane regions (helical) follow at residues 55–75 (LVLVLTPLFFGQMLNWEGPEW), 92–112 (VMPLAVTAMLPVVLFPLVGVL), 123–139 (NDTNFLFIGGLIMAAAV), 162–182 (WIMLGFMTVTALLSSFISNTA), 219–239 (MATGLVLSICFAANIGGTGTA), 268–288 (WIFFAYPLMLLCLFVAWMTLV), 329–349 (ILLSLWVFRNPGVVPGFGVFF), 352–372 (GAYTDATSAMIVAFLLFVLPS), 400–420 (ETFPWSVVLLLGGGFALAAGV), 439–459 (LPLWILQLLTMLIAMVITNIC), 496–516 (FAFIFPVGTPPNAIVFGSGMV), and 521–541 (MAFVGGIISLELLVLTVLYMN).

It belongs to the SLC13A/DASS transporter (TC 2.A.47) family. NADC subfamily. As to expression, nad-1 and nad-2 are coexpressed in the intestinal tract from early larvae to adults, expression is from the pharynx through to the anus. Expression level is significantly greater in the anterior half of the intestine than in the posterior half.

The protein resides in the membrane. Its function is as follows. High-affinity sodium-dicarboxylate cotransporter that accepts a range of tricarboxylic acid-cycle intermediates with 4-5 carbon atoms. There is no interaction with monocarboxylates. Plays a role in the regulation of life span. In Caenorhabditis elegans, this protein is Sodium-dependent high-affinity dicarboxylate transporter 3 (nac-3).